The primary structure comprises 1026 residues: MRFFALFIYRPVATILIAAAITLCGILGFRLLPVAPLPQVDFPVIMVSASLPGASPETMASSVATPLERSLGRIAGVNEMTSSSSLGSTRIILEFNFDRDINGAARDVQAAINAAQSLLPGGMPSRPTYRKANPSDAPIMILTLTSESWSQGKLYDFASTQLAQTIAQIDGVGDVDVGGSSLPAVRVGLNPQALFNQGVSLDEVREAIDSANVRRPQGAIEDSVHRWQIQTNDELKTAAEYQPLIIHYNNGAAVRLGDVASVTDSVQDVRNAGMTNAKPAILLMIRKLPEANIIQTVDGIRAKLPELRAMIPAAIDLQIAQDRSPTIRASLQEVEETLAISVALVIMVVFLFLRSGRATLIPAVAVPVSLIGTFAAMYLCGFSLNNLSLMALTIATGFVVDDAIVVLENIARHLEAGMKPLQAALQGTREVGFTVISMSLSLVAVFLPLLLMGGLPGRLLREFAVTLSVAIGISLVVSLTLTPMMCGWMLKSSKPRTQPRKRGVGRLLVALQQGYGTSLKWVLNHTRLVGVVFLGTVALNIWLYIAIPKTFFPEQDTGVLMGGIQADQSISFQAMRGKLQDFMKIIRDDPAVNNVTGFTGGSRVNSGMMFITLKPRGERKETAQQIIDRLRVKLAKEPGARLFLMAVQDIRVGGRQANASYQYTLLSDSLAALREWEPKIRKALSALPQLADVNFDQQDNGAEMNLIYDRDTMSRLGIDVQAANSLLNNAFGQRQISTIYQPMNQYKVVMEVDPRYSQDISALEKMFVINRDGKAIPLSYFAQWRPANAPLSVNHQGLSAASTIAFNLPTGTSLSQATEAINRTMTQLGVPPTVRGSFSGTAQVFQQTMNSQLILIVAAIATVYIVLGILYESYVHPLTILSTLPSAGVGALLALELFNAPFSLIALIGIMLLIGIVKKNAIMMVDFALEAQRSGGLTPAQAIFQACLLRFRPIMMTTLAALFGALPLVLSGGDGSELRQPLGITIVGGLVMSQLLTLYTTPVVYLFFDRLRLRFSRKNSKPVVEI.

The next 11 membrane-spanning stretches (helical) occupy residues 15-35 (ILIA…LPVA), 333-353 (EVEE…FLFL), 360-380 (LIPA…MYLC), 387-407 (LSLM…IVVL), 431-451 (VGFT…PLLL), 463-483 (FAVT…TLTP), 528-548 (LVGV…IAIP), 853-873 (LILI…LYES), 897-917 (LFNA…IGIV), 953-973 (PIMM…LSGG), and 984-1004 (ITIV…TPVV).

Belongs to the resistance-nodulation-cell division (RND) (TC 2.A.6) family. MdtC subfamily. Part of a tripartite efflux system composed of MdtA, MdtB and MdtC. MdtC forms a heteromultimer with MdtB.

The protein localises to the cell inner membrane. The polypeptide is Multidrug resistance protein MdtC (Salmonella paratyphi C (strain RKS4594)).